The following is a 930-amino-acid chain: Inter-alpha-trypsin inhibitor heavy chain H4 (930 aa).

Positions 1-28 are cleaved as a signal peptide; the sequence is MKPPRPVRTCSKVLVLLSLLAIHQTTTA. Residues 29–148 enclose the VIT domain; sequence EKNGIDIYSL…KITFELVYEE (120 aa). N-linked (GlcNAc...) asparagine glycosylation is found at Asn81 and Asn207. In terms of domain architecture, VWFA spans 272–432; sequence PKNVVFVIDK…YAFLEKLALD (161 aa). Asn274 carries an N-linked (GlcNAc...) asparagine; atypical glycan. 2 N-linked (GlcNAc...) asparagine glycosylation sites follow: Asn517 and Asn577. The interval 595-618 is disordered; the sequence is KPDDQEQSQVAEKPMEGESRNRNV. A proline-rich (PRR) potential bioactive peptide region spans residues 658 to 688; sequence MNFRPGVLSSRQLGLPGPPDVPDHAAYHPFR. Residues 662-688 constitute a propeptide, potentially active peptide; sequence PGVLSSRQLGLPGPPDVPDHAAYHPFR. Residues Thr719, Thr720, and Thr722 are each glycosylated (O-linked (GalNAc...) threonine). The segment at 719–725 is O-glycosylated at three sites; that stretch reads TTMTTQT. Cysteines 747 and 925 form a disulfide.

Belongs to the ITIH family. As to quaternary structure, interacts (via C-terminus) with DNAJC1 (via SANT 2 domain); this interaction protects ITIH4 against cleavage by kallikrein in vitro. Cleaved by plasma kallikrein to yield 100 kDa and 35 kDa fragments, and the resulting 100 kDa fragment is further converted to a 70 kDa fragment. In terms of processing, N- and O-glycosylated. In urine, O-linked glycosylation on threonine residues in the region from Thr-719 to Thr-725 consists of core 1 or possibly core 8 glycans. Mainly Hex(HexNAc)(2), but also some Hex(3)(HexNAc)(3). N-glycosylated but not O-glycosylated in plasma. Liver specific.

It localises to the secreted. Its function is as follows. Type II acute-phase protein (APP) involved in inflammatory responses to trauma. May also play a role in liver development or regeneration. The protein is Inter-alpha-trypsin inhibitor heavy chain H4 (ITIH4) of Homo sapiens (Human).